Consider the following 940-residue polypeptide: Valine--tRNA ligase (940 aa).

The 'HIGH' region signature appears at 47-57 (PNVTGILHMGH). The 'KMSKS' region signature appears at 564-568 (KLSKS). Lysine 567 contributes to the ATP binding site. The stretch at 872–938 (PIEQITKEKN…LQSILDKLAS (67 aa)) forms a coiled coil.

The protein belongs to the class-I aminoacyl-tRNA synthetase family. ValS type 1 subfamily. In terms of assembly, monomer.

The protein resides in the cytoplasm. The enzyme catalyses tRNA(Val) + L-valine + ATP = L-valyl-tRNA(Val) + AMP + diphosphate. In terms of biological role, catalyzes the attachment of valine to tRNA(Val). As ValRS can inadvertently accommodate and process structurally similar amino acids such as threonine, to avoid such errors, it has a 'posttransfer' editing activity that hydrolyzes mischarged Thr-tRNA(Val) in a tRNA-dependent manner. The protein is Valine--tRNA ligase of Chlamydia felis (strain Fe/C-56) (Chlamydophila felis).